The following is a 120-amino-acid chain: MERIMFRAKIHRATVTQADLDYVGSVTIDQDLLDAADILVNEKVDIWNITNGNRLHTYALSGPRGSGVIGINGAAAHLMRPGDMVIIAAFGNFTEEEARVLEPKVVLVDARNRLLELEPA.

Catalysis depends on serine 25, which acts as the Schiff-base intermediate with substrate; via pyruvic acid. Serine 25 is modified (pyruvic acid (Ser)). Residue threonine 57 participates in substrate binding. Residue tyrosine 58 is the Proton donor of the active site. 73–75 (GAA) is a substrate binding site.

Belongs to the PanD family. In terms of assembly, heterooctamer of four alpha and four beta subunits. The cofactor is pyruvate. Post-translationally, is synthesized initially as an inactive proenzyme, which is activated by self-cleavage at a specific serine bond to produce a beta-subunit with a hydroxyl group at its C-terminus and an alpha-subunit with a pyruvoyl group at its N-terminus.

The protein resides in the cytoplasm. It carries out the reaction L-aspartate + H(+) = beta-alanine + CO2. It functions in the pathway cofactor biosynthesis; (R)-pantothenate biosynthesis; beta-alanine from L-aspartate: step 1/1. Catalyzes the pyruvoyl-dependent decarboxylation of aspartate to produce beta-alanine. This chain is Aspartate 1-decarboxylase, found in Deinococcus deserti (strain DSM 17065 / CIP 109153 / LMG 22923 / VCD115).